The primary structure comprises 104 residues: Large ribosomal subunit protein uL24 (104 aa).

The protein belongs to the universal ribosomal protein uL24 family. Part of the 50S ribosomal subunit.

Its function is as follows. One of two assembly initiator proteins, it binds directly to the 5'-end of the 23S rRNA, where it nucleates assembly of the 50S subunit. One of the proteins that surrounds the polypeptide exit tunnel on the outside of the subunit. In Shewanella loihica (strain ATCC BAA-1088 / PV-4), this protein is Large ribosomal subunit protein uL24.